A 1733-amino-acid chain; its full sequence is ATP-binding cassette sub-family A member 17 (1733 aa).

Transmembrane regions (helical) follow at residues 22–42 (TLIT…VLYL), 262–282 (FPLL…NSVL), 306–326 (AWFI…TVLF), 342–362 (TLIF…AFMM), 372–392 (GTVI…YITF), 403–423 (ILSC…ISLF), and 444–464 (FAQV…IAFL). The ABC transporter 1 domain maps to 519-752 (IEIQHLYKVF…YGAGYYMTII (234 aa)). 555-562 (GHNGAGKT) is an ATP binding site. N609 is a glycosylation site (N-linked (GlcNAc...) asparagine). The next 7 helical transmembrane spans lie at 906–926 (LVLS…LTFF), 1082–1102 (LVVN…ILTV), 1128–1148 (LLWD…VFLW), 1160–1180 (IPAV…LVYT), 1192–1212 (CVKL…LVTV), 1230–1250 (IFLI…YYNF), and 1287–1307 (IGKY…MLFL). The region spanning 1366–1599 (LVVKEVSKVY…FGISYSLQAK (234 aa)) is the ABC transporter 2 domain. Position 1401 to 1408 (1401 to 1408 (GLNGAGKT)) interacts with ATP. Positions 1681-1692 (ESSTKEQIQQEQ) are enriched in polar residues. The disordered stretch occupies residues 1681 to 1733 (ESSTKEQIQQEQAVLASPSPPSNSRPISSPPSRLSSPTPKPLPSPPPSEPILL). Low complexity predominate over residues 1704–1717 (SRPISSPPSRLSSP). Residues 1718 to 1733 (TPKPLPSPPPSEPILL) are compositionally biased toward pro residues.

It belongs to the ABC transporter superfamily. ABCA family. In terms of processing, N-glycosylated. As to expression, in the testis, detected predominantly in elongated spermatids at the late stage of germ cell development and in sperm, with no expression detected in immature germ cells such as spermatogonia and spermatocytes or in somatic cells such as Sertoli cells (at protein level). Expressed in the head and tail midpiece of elongated spermatids and sperm (at protein level). Expressed exclusively in the testis.

Its subcellular location is the endoplasmic reticulum membrane. It is found in the cytoplasm. The enzyme catalyses cholesterol(in) + ATP + H2O = cholesterol(out) + ADP + phosphate + H(+). In terms of biological role, promotes cholesterol efflux from sperm which renders sperm capable of fertilization. Has also been shown to decrease levels of intracellular esterified neutral lipids including cholesteryl esters, fatty acid esters and triacylglycerols. This chain is ATP-binding cassette sub-family A member 17, found in Mus musculus (Mouse).